We begin with the raw amino-acid sequence, 489 residues long: uncharacterized protein (489 aa).

11 consecutive transmembrane segments (helical) span residues 29-49 (FIAS…TGLG), 67-87 (LLYA…KYLG), 90-110 (WALA…WYFD), 119-139 (IFTG…TAYI), 152-172 (FIAT…FIAF), 186-206 (AVYI…ILFI), 276-296 (LNNV…TLIL), 308-328 (IIGL…ELGW), 351-371 (GGAL…IVSV), 397-417 (AAGM…LGQG), and 418-438 (IIYF…TSIF).

It is found in the membrane. This is an uncharacterized protein from Schizosaccharomyces pombe (strain 972 / ATCC 24843) (Fission yeast).